Here is a 232-residue protein sequence, read N- to C-terminus: Ornithine carbamoyltransferase (232 aa).

Residues Gln-15, Arg-39, and His-66–Gln-69 each bind carbamoyl phosphate. L-ornithine is bound by residues Asn-99, Asp-163, and Ser-167–Met-168. Carbamoyl phosphate contacts are provided by residues His-204–Pro-207 and Thr-232.

Belongs to the aspartate/ornithine carbamoyltransferase superfamily. OTCase family.

The protein localises to the cytoplasm. The catalysed reaction is carbamoyl phosphate + L-ornithine = L-citrulline + phosphate + H(+). The protein operates within amino-acid biosynthesis; L-arginine biosynthesis; L-arginine from L-ornithine and carbamoyl phosphate: step 1/3. The polypeptide is Ornithine carbamoyltransferase (argF) (Neisseria animalis).